A 602-amino-acid polypeptide reads, in one-letter code: Type 2 DNA topoisomerase 6 subunit B (602 aa).

ATP-binding positions include N40, D71, 92 to 93, 102 to 109, and K425; these read SR and GQQGIGIS.

The protein belongs to the TOP6B family. Homodimer. Heterotetramer of two Top6A and two Top6B chains.

It carries out the reaction ATP-dependent breakage, passage and rejoining of double-stranded DNA.. In terms of biological role, relaxes both positive and negative superturns and exhibits a strong decatenase activity. The protein is Type 2 DNA topoisomerase 6 subunit B of Archaeoglobus fulgidus (strain ATCC 49558 / DSM 4304 / JCM 9628 / NBRC 100126 / VC-16).